Here is a 170-residue protein sequence, read N- to C-terminus: ATP synthase subunit b (170 aa).

Residues 22–41 (VLNWAVVVFGLYKFLPGFLG) form a helical membrane-spanning segment.

Belongs to the ATPase B chain family. F-type ATPases have 2 components, F(1) - the catalytic core - and F(0) - the membrane proton channel. F(1) has five subunits: alpha(3), beta(3), gamma(1), delta(1), epsilon(1). F(0) has four main subunits: a(1), b(1), b'(1) and c(10-14). The alpha and beta chains form an alternating ring which encloses part of the gamma chain. F(1) is attached to F(0) by a central stalk formed by the gamma and epsilon chains, while a peripheral stalk is formed by the delta, b and b' chains.

It is found in the cellular thylakoid membrane. F(1)F(0) ATP synthase produces ATP from ADP in the presence of a proton or sodium gradient. F-type ATPases consist of two structural domains, F(1) containing the extramembraneous catalytic core and F(0) containing the membrane proton channel, linked together by a central stalk and a peripheral stalk. During catalysis, ATP synthesis in the catalytic domain of F(1) is coupled via a rotary mechanism of the central stalk subunits to proton translocation. Its function is as follows. Component of the F(0) channel, it forms part of the peripheral stalk, linking F(1) to F(0). This is ATP synthase subunit b from Prochlorococcus marinus subsp. pastoris (strain CCMP1986 / NIES-2087 / MED4).